The sequence spans 316 residues: 4-diphosphocytidyl-2-C-methyl-D-erythritol kinase (316 aa).

Residue lysine 32 is part of the active site. Proline 126–alanine 136 contacts ATP. Residue aspartate 168 is part of the active site.

It belongs to the GHMP kinase family. IspE subfamily.

It catalyses the reaction 4-CDP-2-C-methyl-D-erythritol + ATP = 4-CDP-2-C-methyl-D-erythritol 2-phosphate + ADP + H(+). Its pathway is isoprenoid biosynthesis; isopentenyl diphosphate biosynthesis via DXP pathway; isopentenyl diphosphate from 1-deoxy-D-xylulose 5-phosphate: step 3/6. Catalyzes the phosphorylation of the position 2 hydroxy group of 4-diphosphocytidyl-2C-methyl-D-erythritol. This chain is 4-diphosphocytidyl-2-C-methyl-D-erythritol kinase, found in Bifidobacterium longum (strain NCC 2705).